The sequence spans 265 residues: R-spondin-1 (265 aa).

The N-terminal stretch at 1 to 20 (MRLGLCVVALVLSWTHIAVG) is a signal peptide. FU repeat units lie at residues 34–85 (AEGS…GYFD) and 91–135 (MNKC…GSTA). 11 disulfide bridges follow: cysteine 40–cysteine 47, cysteine 44–cysteine 53, cysteine 56–cysteine 75, cysteine 79–cysteine 94, cysteine 97–cysteine 105, cysteine 102–cysteine 111, cysteine 114–cysteine 125, cysteine 129–cysteine 142, cysteine 148–cysteine 190, cysteine 159–cysteine 166, and cysteine 199–cysteine 206. Residue asparagine 137 is glycosylated (N-linked (GlcNAc...) asparagine). Residues 147–207 (QCEMSEWSPW…KCTVRRTPCP (61 aa)) enclose the TSP type-1 domain. The C-linked (Man) tryptophan glycan is linked to tryptophan 153. Tryptophan 156 carries C-linked (Man) tryptophan; by DPY19L3 glycosylation. Disordered regions lie at residues 173-192 (EERTRRVLHAPGGDHTTCSD) and 201-265 (VRRT…TWAQ). The segment covering 245–257 (QQQPQPGTTGPLT) has biased composition (low complexity).

The protein belongs to the R-spondin family. In terms of assembly, interacts with ZNRF3; promoting indirect interaction between ZNRF3 and LGR4 and membrane clearance of ZNRF3. Identified in a complex composed of RNF43, LGR5 and RSPO1. Interacts with the extracellular domain of FZD8 and LRP6. It however does not form a ternary complex with FZD8 and LRP6. Interacts with WNT1. Binds heparin. Interacts with LGR4, LGR5 and LGR6. Interacts (via FU repeats) with KREM1. In terms of processing, C-, and N-glycosylated. N-glycosylation at Asn-137, negatively influences its secretion and enhancing effect on Wnt/beta-catenin signaling. C-mannosylation at Trp-156 by DPY19L3 is required for its secretion an regulates the enhancing activity of Wnt signaling. As to expression, expressed in the dorsal part of the neural tube on 10 and 12 dpc, especially in the boundary region between roof plate and neuroepithelium. This expression is enhanced in the rostral part. Also expressed in other tissues such as truncal region neighboring forelimbs and mesenchymal tissues around the nasal cavity.

It is found in the secreted. The protein localises to the nucleus. Functionally, activator of the canonical Wnt signaling pathway by acting as a ligand for LGR4-6 receptors. Upon binding to LGR4-6 (LGR4, LGR5 or LGR6), LGR4-6 associate with phosphorylated LRP6 and frizzled receptors that are activated by extracellular Wnt receptors, triggering the canonical Wnt signaling pathway to increase expression of target genes. Also regulates the canonical Wnt/beta-catenin-dependent pathway and non-canonical Wnt signaling by acting as an inhibitor of ZNRF3, an important regulator of the Wnt signaling pathway. Acts as a ligand for frizzled FZD8 and LRP6. May negatively regulate the TGF-beta pathway. Has a essential roles in ovary determination. Regulates Wnt signaling by antagonizing DKK1/KREM1-mediated internalization of LRP6 through an interaction with KREM1. The chain is R-spondin-1 (Rspo1) from Mus musculus (Mouse).